A 254-amino-acid polypeptide reads, in one-letter code: Probable triosephosphate isomerase 2 (254 aa).

Asn-9–Lys-11 provides a ligand contact to substrate. The active-site Electrophile is the His-96. Catalysis depends on Glu-168, which acts as the Proton acceptor. 2 residues coordinate substrate: Gly-174 and Ser-212.

Belongs to the triosephosphate isomerase family. In terms of assembly, homodimer.

Its subcellular location is the cytoplasm. It carries out the reaction D-glyceraldehyde 3-phosphate = dihydroxyacetone phosphate. It participates in carbohydrate biosynthesis; gluconeogenesis. It functions in the pathway carbohydrate degradation; glycolysis; D-glyceraldehyde 3-phosphate from glycerone phosphate: step 1/1. Functionally, involved in the gluconeogenesis. Catalyzes stereospecifically the conversion of dihydroxyacetone phosphate (DHAP) to D-glyceraldehyde-3-phosphate (G3P). The sequence is that of Probable triosephosphate isomerase 2 from Listeria monocytogenes serovar 1/2a (strain ATCC BAA-679 / EGD-e).